An 827-amino-acid polypeptide reads, in one-letter code: Histone acetyltransferase MOF (827 aa).

4 disordered regions span residues 1 to 190 (MSEA…SDTV), 237 to 276 (QLGL…AVYL), 288 to 309 (STPG…MPPP), and 324 to 360 (EAIS…TSRE). Residues 19 to 30 (PIEEEHEPEQEP) are compositionally biased toward acidic residues. Over residues 55-69 (LDVSGSDQSAEQSLD) the composition is skewed to polar residues. Residues 103–116 (SSTSTSSTRSSSSS) are compositionally biased toward low complexity. Residues 121-133 (VSEAEEAPPEPEP) show a composition bias toward acidic residues. Over residues 141–150 (QEEKKEDGQD) the composition is skewed to basic and acidic residues. The span at 176–186 (DQEIETEDEPS) shows a compositional bias: acidic residues. Residues 243 to 253 (AAPPPPPPPPA) show a composition bias toward pro residues. Residues 326 to 350 (ISDDSSETSSSDDDEEEEEDEDDAL) show a composition bias toward acidic residues. Lysine 372 participates in a covalent cross-link: Glycyl lysine isopeptide (Lys-Gly) (interchain with G-Cter in ubiquitin). The region spanning 382–433 (IYFIRREDGTVHRGQVLQSRTTENAAAPDEYYVHYVGLNRRLDGWVGRHRIS) is the Tudor-knot domain. Glycyl lysine isopeptide (Lys-Gly) (interchain with G-Cter in ubiquitin) cross-links involve residues lysine 483, lysine 532, and lysine 539. The MYST-type HAT domain maps to 538-813 (TKIKYIDKLQ…IDTDYLVWSP (276 aa)). Residues 571-596 (LYVCEYCLKYMRFRSSYAYHLHECDR) form a C2HC MYST-type zinc finger. Zn(2+) is bound by residues cysteine 574, cysteine 577, histidine 590, and cysteine 594. An N6-acetyllysine; by autocatalysis modification is found at lysine 638. Acetyl-CoA-binding residues include isoleucine 681, arginine 689, lysine 690, glycine 691, glycine 693, and lysine 694. Residue glutamate 714 is the Proton donor/acceptor of the active site. A Glycyl lysine isopeptide (Lys-Gly) (interchain with G-Cter in ubiquitin) cross-link involves residue lysine 715. Positions 718 and 727 each coordinate acetyl-CoA. Lysine 749 is covalently cross-linked (Glycyl lysine isopeptide (Lys-Gly) (interchain with G-Cter in ubiquitin)). Tyrosine 774 contributes to the acetyl-CoA binding site. Glycyl lysine isopeptide (Lys-Gly) (interchain with G-Cter in ubiquitin) cross-links involve residues lysine 776, lysine 798, and lysine 801. Position 798 (lysine 798) interacts with acetyl-CoA.

This sequence belongs to the MYST (SAS/MOZ) family. As to quaternary structure, component of the male-specific lethal (MSL) histone acetyltransferase complex, composed of mof, mle, msl-1, msl-2 and msl-3 proteins, as well as roX1 and roX2 non-coding RNAs. Component of a maternal MSL subcomplex composed of mof, msl-1 and msl-3. Component of the non-specific lethal (NLS) histone acetyltransferase complex at least composed of mof, nls1, dgt1/NSL2, Rcd1/NSL3, Rcd5/MCRS2, MBD-R2 and wds. In males, interacts with nucleoporin Mgtor. Post-translationally, autoacetylation at Lys-638 is required for binding histone H4 with high affinity and for proper function. Ubiquitinated by msl-2.

It is found in the nucleus. The protein localises to the chromosome. It carries out the reaction L-lysyl-[histone] + acetyl-CoA = N(6)-acetyl-L-lysyl-[histone] + CoA + H(+). Functionally, histone acetyltransferase that catalyzes the formation of the majority of histone H4 acetylation at 'Lys-16' (H4K16ac), an epigenetic mark that prevents chromatin compaction and constitutes the only acetylation mark intergenerationally transmitted. Catalytic component of the male-specific lethal (MSL) complex, a multiprotein complex essential for elevating transcription of the single X chromosome in the male (X chromosome dosage compensation). The MSL complex specifically associates with the single X chromosome in males and mediates formation of H4K16ac, promoting a two-fold activation of X chromosome. Dosage compensation ensures that males with a single X chromosome have the same amount of most X-linked gene products as females with two X chromosomes. In oocytes, mof is also part of a maternal MSL subcomplex that mediates H4K16ac deposition for intergenerational transmission: H4K16ac prepares the chromatin landscape for establishment of nucleosome accessibility and poises genes for future activation. H4K16ac constitutes the only acetylation mark maintained from oocytes to fertilized embryos. Mof also constitutes the catalytic component of the non-specific lethal (NLS) complex, which promotes expression of housekeeping genes on X chromosome and autosomes. The NSL complex promotes strong expression of housekeeping genes compared to the two-fold expression mediated by the MSL complex on X chromosome, suggesting that the activation potential of mof is constrained in the context of dosage compensation. The chain is Histone acetyltransferase MOF from Drosophila melanogaster (Fruit fly).